A 154-amino-acid chain; its full sequence is Egg-lysin (154 aa).

Residues 1–18 (MKLLVLCIFAMMATLAMS) form the signal peptide.

Homodimer. Sperm.

Functionally, dissolves the egg vitelline layer nonenzymatically during fertilization. It creates a hole of about 3 mu-m in diameter through which the sperm pass. This is Egg-lysin from Haliotis sorenseni (White abalone).